The following is a 174-amino-acid chain: Phosphopantetheine adenylyltransferase (174 aa).

Position 10 (threonine 10) interacts with substrate. ATP contacts are provided by residues 10-11 (TF) and histidine 18. Lysine 44, leucine 76, and arginine 90 together coordinate substrate. ATP contacts are provided by residues 91-93 (GLR), glutamate 101, and 126-132 (HAYISSS).

This sequence belongs to the bacterial CoaD family. As to quaternary structure, homohexamer. The cofactor is Mg(2+).

It localises to the cytoplasm. The enzyme catalyses (R)-4'-phosphopantetheine + ATP + H(+) = 3'-dephospho-CoA + diphosphate. Its pathway is cofactor biosynthesis; coenzyme A biosynthesis; CoA from (R)-pantothenate: step 4/5. Its function is as follows. Reversibly transfers an adenylyl group from ATP to 4'-phosphopantetheine, yielding dephospho-CoA (dPCoA) and pyrophosphate. The sequence is that of Phosphopantetheine adenylyltransferase from Alkalilimnicola ehrlichii (strain ATCC BAA-1101 / DSM 17681 / MLHE-1).